Reading from the N-terminus, the 583-residue chain is Exonuclease 3'-5' domain-containing protein 2 (583 aa).

The Mitochondrial intermembrane portion of the chain corresponds to 1–11 (MTRESAVATKR). The helical transmembrane segment at 12-29 (NWAILAAGVGLVYVLVRH) threads the bilayer. Residues 30 to 583 (RHRLLCPLRR…AGLDAKIKET (554 aa)) are Cytoplasmic-facing. A 3'-5' exonuclease domain is found at 62–228 (TTQWVLNELK…AIYQKLCRDL (167 aa)). Positions 83, 85, and 213 each coordinate a divalent metal cation. The span at 266–281 (GSGVTRSKGSTQSKSN) shows a compositional bias: polar residues. Residues 266–286 (GSGVTRSKGSTQSKSNKWVPK) form a disordered region.

This sequence belongs to the EXD2 family. In terms of assembly, homodimer. It depends on Mg(2+) as a cofactor. Mn(2+) is required as a cofactor.

Its subcellular location is the mitochondrion membrane. Its function is as follows. 3'-5' exoribonuclease required for mitochondrial metabolism. The protein is Exonuclease 3'-5' domain-containing protein 2 of Drosophila melanogaster (Fruit fly).